Reading from the N-terminus, the 797-residue chain is Inulosucrase (797 aa).

The first 36 residues, methionine 1 to alanine 36, serve as a signal peptide directing secretion. Positions alanine 54–glutamine 64 are enriched in polar residues. A disordered region spans residues alanine 54–lysine 176. Basic and acidic residues-rich tracts occupy residues valine 65–threonine 75 and alanine 82–glutamate 95. Residues aspartate 130 to threonine 139 show a composition bias toward low complexity. Residues aspartate 140–serine 167 show a composition bias toward basic and acidic residues. Position 271 (tryptophan 271) interacts with substrate. Catalysis depends on aspartate 272, which acts as the Nucleophile. Asparagine 317 contributes to the Ca(2+) binding site. Serine 340 contributes to the substrate binding site. Residue aspartate 419 coordinates Ca(2+). Arginine 424 to aspartate 425 contacts substrate. Ca(2+) contacts are provided by glutamine 450, tryptophan 487, asparagine 489, and aspartate 521. Residues glutamate 522–glutamate 524 and arginine 542 contribute to the substrate site. Glutamate 524 acts as the Proton donor/acceptor in catalysis. Residues aspartate 660, isoleucine 662, and serine 667 each coordinate Ca(2+). The tract at residues glutamine 708–aspartate 766 is disordered. Positions threonine 718 to threonine 740 are enriched in low complexity. The LPXTG sorting signal signature appears at leucine 761–glycine 765. Residue alanine 764 is modified to Pentaglycyl murein peptidoglycan amidated alanine. The propeptide at glycine 765–asparagine 797 is removed by sortase.

The protein belongs to the glycosyl hydrolase 68 family. Ca(2+) serves as cofactor.

It localises to the secreted. The protein localises to the cell wall. The catalysed reaction is [(2-&gt;1)-beta-D-fructosyl](n) + sucrose = [(2-&gt;1)-beta-D-fructosyl](n+1) + D-glucose. In terms of biological role, fructosyltransferase that catalyzes the polymerization of the fructose moiety of sucrose to produce inulin polymer and inulin oligosaccharides such as 1-kestose and nystose. This is Inulosucrase from Lactobacillus johnsonii (strain CNCM I-12250 / La1 / NCC 533).